The chain runs to 188 residues: MSRLTVYRDDAPDTILLDVTTPGEIAETLRPHNIRFDRWSAPITPAPDAPAEEVLDAYRPYLDTLMGETGAGSADVVRINASTPNLPELRKKFLSEHTHSEDEVRFFVHGQGAFVLHIRGRVYSVLCTQGDLISVPAGIPHWFDAGPSPDVVALRVFTDTTGWIAQYTGDDIANRFPAEVPVEASGNS.

The Fe(2+) site is built by His97, His99, Glu103, and His141. Ni(2+) contacts are provided by His97, His99, Glu103, and His141.

This sequence belongs to the acireductone dioxygenase (ARD) family. Monomer. Requires Fe(2+) as cofactor. Ni(2+) is required as a cofactor.

The catalysed reaction is 1,2-dihydroxy-5-(methylsulfanyl)pent-1-en-3-one + O2 = 3-(methylsulfanyl)propanoate + CO + formate + 2 H(+). It carries out the reaction 1,2-dihydroxy-5-(methylsulfanyl)pent-1-en-3-one + O2 = 4-methylsulfanyl-2-oxobutanoate + formate + 2 H(+). The protein operates within amino-acid biosynthesis; L-methionine biosynthesis via salvage pathway; L-methionine from S-methyl-5-thio-alpha-D-ribose 1-phosphate: step 5/6. Catalyzes 2 different reactions between oxygen and the acireductone 1,2-dihydroxy-3-keto-5-methylthiopentene (DHK-MTPene) depending upon the metal bound in the active site. Fe-containing acireductone dioxygenase (Fe-ARD) produces formate and 2-keto-4-methylthiobutyrate (KMTB), the alpha-ketoacid precursor of methionine in the methionine recycle pathway. Ni-containing acireductone dioxygenase (Ni-ARD) produces methylthiopropionate, carbon monoxide and formate, and does not lie on the methionine recycle pathway. The protein is Acireductone dioxygenase of Gluconobacter oxydans (strain 621H) (Gluconobacter suboxydans).